A 191-amino-acid chain; its full sequence is uncharacterized protein (191 aa).

A Fe2OG dioxygenase domain is found at 87 to 184 (EFDSALIFHY…RIAITFRQMG (98 aa)).

This is an uncharacterized protein from Acanthamoeba polyphaga mimivirus (APMV).